The chain runs to 540 residues: Peptide chain release factor 3 (540 aa).

Positions 14–283 constitute a tr-type G domain; that stretch reads NQRRNFAIIS…AFLDYALKPI (270 aa). GTP is bound by residues 23–30, 91–95, and 145–148; these read SHPDAGKT, DTPGH, and NKLD.

Belongs to the TRAFAC class translation factor GTPase superfamily. Classic translation factor GTPase family. PrfC subfamily.

The protein resides in the cytoplasm. Its function is as follows. Increases the formation of ribosomal termination complexes and stimulates activities of RF-1 and RF-2. It binds guanine nucleotides and has strong preference for UGA stop codons. It may interact directly with the ribosome. The stimulation of RF-1 and RF-2 is significantly reduced by GTP and GDP, but not by GMP. The sequence is that of Peptide chain release factor 3 from Gloeothece citriformis (strain PCC 7424) (Cyanothece sp. (strain PCC 7424)).